Here is a 451-residue protein sequence, read N- to C-terminus: Tubulin beta-4 chain (451 aa).

Residues Gln11, Glu69, Ser138, Gly142, Thr143, Gly144, Asn204, and Asn226 each coordinate GTP. Residue Glu69 participates in Mg(2+) binding. Positions 417 to 427 are enriched in polar residues; sequence DLVSEYQQYQD. The segment at 417 to 451 is disordered; sequence DLVSEYQQYQDATAEEEGEYDEDDGGYGDEDDGMM. Over residues 429 to 451 the composition is skewed to acidic residues; the sequence is TAEEEGEYDEDDGGYGDEDDGMM.

It belongs to the tubulin family. In terms of assembly, dimer of alpha and beta chains. A typical microtubule is a hollow water-filled tube with an outer diameter of 25 nm and an inner diameter of 15 nM. Alpha-beta heterodimers associate head-to-tail to form protofilaments running lengthwise along the microtubule wall with the beta-tubulin subunit facing the microtubule plus end conferring a structural polarity. Microtubules usually have 13 protofilaments but different protofilament numbers can be found in some organisms and specialized cells. The cofactor is Mg(2+).

Its subcellular location is the cytoplasm. It is found in the cytoskeleton. Tubulin is the major constituent of microtubules, a cylinder consisting of laterally associated linear protofilaments composed of alpha- and beta-tubulin heterodimers. Microtubules grow by the addition of GTP-tubulin dimers to the microtubule end, where a stabilizing cap forms. Below the cap, tubulin dimers are in GDP-bound state, owing to GTPase activity of alpha-tubulin. This chain is Tubulin beta-4 chain (TUBB4), found in Oomycete-like sp. (strain MacKay2000).